A 316-amino-acid chain; its full sequence is MST50-interacting protein 11 (316 aa).

7 WD repeats span residues 13 to 53 (GHNG…TSYG), 61 to 100 (GHSHIVSDCVISSDGAYALSASWDKTLRLWELATGTTTRR), 103 to 142 (GHTNDVLSVSFSADNRQIVSGSRDRSIKLWNTLGDCKYTI), 146 to 187 (GHSE…LQTD), 190 to 229 (GHTGYINTVTISPDGSLCASGGKDGTTMLWDLNESKHLYS), 231 to 269 (NANDEIHALVFSPNRYWLCAATASSIIIFDLEKKSKVDE), and 281 to 316 (SREPECISLAWSADGQTLFAGYTDNIIRAWGVMSRA).

This sequence belongs to the WD repeat G protein beta family. Ribosomal protein RACK1 subfamily. As to quaternary structure, interacts with MST50 and MCK1.

Functionally, involved in regulating the cell wall integrity and MPS1 activation via its interaction with the MAPKKK MCK1. This is MST50-interacting protein 11 from Pyricularia oryzae (strain 70-15 / ATCC MYA-4617 / FGSC 8958) (Rice blast fungus).